We begin with the raw amino-acid sequence, 613 residues long: Transcription factor MTB1 (613 aa).

The segment at 48–130 is JAZ-interaction domain; the sequence is LQNKLSDLVE…RVLQKLHMLF (83 aa). 2 disordered regions span residues 256–285 and 391–441; these read EKNEGNNPRLSNSGAVTERTDGNPKIFGHD and AHNV…AERQ. Residues 260 to 270 show a composition bias toward polar residues; the sequence is GNNPRLSNSGA. Composition is skewed to basic and acidic residues over residues 394–417 and 427–441; these read VESEHSDVEASCKEDRAGPVDEKR and NGREEPLNHVEAERQ. The tract at residues 430-443 is basic motif; degenerate; it reads EEPLNHVEAERQRR. In terms of domain architecture, bHLH spans 430–479; that stretch reads EEPLNHVEAERQRREKLNQRFYALRAVVPNISKMDKASLLGDAIAYITEL. A helix-loop-helix motif region spans residues 444–479; the sequence is EKLNQRFYALRAVVPNISKMDKASLLGDAIAYITEL. The interval 490-513 is disordered; it reads RELRLGSTSRDAITSEDSPSSEIQ. Over residues 495–512 the composition is skewed to polar residues; that stretch reads GSTSRDAITSEDSPSSEI.

In terms of assembly, interacts with MYC2 (via N-terminus). MTB1 competes with MED25 for binding to MYC2. Interacts (via N-terminus) with JAZ7.

Its subcellular location is the nucleus. Transcription factor that negatively regulates jasmonate (JA) signaling. Negatively regulates JA-dependent response to wounding, JA-induced expression of defense genes, JA-dependent responses against herbivorous insects, and JA-dependent resistance against Botrytis cinerea infection. Plays a positive role in resistance against the bacterial pathogen Pseudomonas syringae pv tomato DC3000. This Solanum lycopersicum (Tomato) protein is Transcription factor MTB1.